Consider the following 336-residue polypeptide: Ketol-acid reductoisomerase (NADP(+)) 1 (336 aa).

Residues 2–181 (AKVYYEKDVT…GATRAGVLET (180 aa)) enclose the KARI N-terminal Rossmann domain. Residues 25–28 (YGSQ), Arg48, Ser52, and 82–85 (DELQ) each bind NADP(+). His107 is an active-site residue. Position 133 (Gly133) interacts with NADP(+). The 146-residue stretch at 182 to 327 (TFKEETETDL…RKLREMMPFV (146 aa)) folds into the KARI C-terminal knotted domain. 4 residues coordinate Mg(2+): Asp190, Glu194, Glu226, and Glu230. Ser251 provides a ligand contact to substrate.

This sequence belongs to the ketol-acid reductoisomerase family. Mg(2+) serves as cofactor.

The enzyme catalyses (2R)-2,3-dihydroxy-3-methylbutanoate + NADP(+) = (2S)-2-acetolactate + NADPH + H(+). The catalysed reaction is (2R,3R)-2,3-dihydroxy-3-methylpentanoate + NADP(+) = (S)-2-ethyl-2-hydroxy-3-oxobutanoate + NADPH + H(+). It functions in the pathway amino-acid biosynthesis; L-isoleucine biosynthesis; L-isoleucine from 2-oxobutanoate: step 2/4. It participates in amino-acid biosynthesis; L-valine biosynthesis; L-valine from pyruvate: step 2/4. Functionally, involved in the biosynthesis of branched-chain amino acids (BCAA). Catalyzes an alkyl-migration followed by a ketol-acid reduction of (S)-2-acetolactate (S2AL) to yield (R)-2,3-dihydroxy-isovalerate. In the isomerase reaction, S2AL is rearranged via a Mg-dependent methyl migration to produce 3-hydroxy-3-methyl-2-ketobutyrate (HMKB). In the reductase reaction, this 2-ketoacid undergoes a metal-dependent reduction by NADPH to yield (R)-2,3-dihydroxy-isovalerate. The sequence is that of Ketol-acid reductoisomerase (NADP(+)) 1 from Bacillus thuringiensis subsp. konkukian (strain 97-27).